A 210-amino-acid chain; its full sequence is Somatotropin (210 aa).

The N-terminal stretch at 1-23 (MARVLVLLSVVLVSLLVNQGRAS) is a signal peptide. His38 lines the Zn(2+) pocket. The cysteines at positions 71 and 183 are disulfide-linked. Glu192 provides a ligand contact to Zn(2+). A disulfide bridge links Cys200 with Cys208.

The protein belongs to the somatotropin/prolactin family.

Its subcellular location is the secreted. In terms of biological role, growth hormone plays an important role in growth control. The protein is Somatotropin (gh) of Cyprinus carpio (Common carp).